Consider the following 335-residue polypeptide: tRNA N6-adenosine threonylcarbamoyltransferase (335 aa).

Residues histidine 110 and histidine 114 each coordinate Fe cation. Substrate contacts are provided by residues 132–136 (LVSGG), aspartate 165, glycine 178, and asparagine 271. Aspartate 299 provides a ligand contact to Fe cation.

This sequence belongs to the KAE1 / TsaD family. The cofactor is Fe(2+).

Its subcellular location is the cytoplasm. The catalysed reaction is L-threonylcarbamoyladenylate + adenosine(37) in tRNA = N(6)-L-threonylcarbamoyladenosine(37) in tRNA + AMP + H(+). Its function is as follows. Required for the formation of a threonylcarbamoyl group on adenosine at position 37 (t(6)A37) in tRNAs that read codons beginning with adenine. Is involved in the transfer of the threonylcarbamoyl moiety of threonylcarbamoyl-AMP (TC-AMP) to the N6 group of A37, together with TsaE and TsaB. TsaD likely plays a direct catalytic role in this reaction. The sequence is that of tRNA N6-adenosine threonylcarbamoyltransferase from Campylobacter jejuni subsp. jejuni serotype O:6 (strain 81116 / NCTC 11828).